The primary structure comprises 200 residues: MFLARLTSRLARTVVPWAGFSRSCPGSGVIGSYAFRPLYSLQPASPSRAASLPGKRTQSELEEFLVPRKMAISPLESWLTAQYLLPRRNVEVPVTLAPSQFYECPPRQGEEEAQQGVREAWDATPVQCKNVLKIRRRKMNHHKYRKLVKRTRFLRRKVREGRLKKKQIKFEKDLKRIWLKAGLKEAPENWQTPKIYLKNK.

This sequence belongs to the mitochondrion-specific ribosomal protein mS38 family. As to quaternary structure, component of the mitochondrial ribosome small subunit (28S) which comprises a 12S rRNA and about 30 distinct proteins. Interacts with Aurora-A. In terms of tissue distribution, ubiquitously expressed and especially highly expressed in heart, skeletal muscle and testis.

The protein localises to the mitochondrion matrix. It is found in the nucleus. In terms of biological role, may act as a negative regulator of Aurora-A kinase, by down-regulation through proteasome-dependent degradation. The polypeptide is Small ribosomal subunit protein mS38 (Aurkaip1) (Mus musculus (Mouse)).